A 278-amino-acid chain; its full sequence is HTH-type transcriptional activator RhaS (278 aa).

One can recognise an HTH araC/xylS-type domain in the interval 174–272; it reads NQLMAWLEDH…NWSPRDIRQG (99 aa). DNA-binding regions (H-T-H motif) lie at residues 191 to 212 and 239 to 262; these read EAVA…KQHT and VTEI…RREF.

In terms of assembly, binds DNA as a dimer.

It localises to the cytoplasm. Activates expression of the rhaBAD and rhaT operons. The chain is HTH-type transcriptional activator RhaS from Salmonella paratyphi A (strain ATCC 9150 / SARB42).